We begin with the raw amino-acid sequence, 570 residues long: MSEKHPGPLVVEGKLTDAERMKLESNYLRGTIAEDLNDGLTGGFKGDNFLLIRFHGMYQQDDRDIRAERAEQKLEPRHAMLLRCRLPGGVITTKQWQAIDKFAGENTIYGSIRLTNRQTFQFHGILKKNVKPVHQMLHSVGLDALATANDMNRNVLCTSNPYESQLHAEAYEWAKKISEHLLPRTRAYAEIWLDQEKVATTDEEPILGQTYLPRKFKTTVVIPPQNDIDLHANDMNFVAIAENGKLVGFNLLVGGGLSIEHGNKKTYARTASEFGYLPLEHTLAVAEAVVTTQRDWGNRTDRKNAKTKYTLERVGVETFKAEVERRAGIKFEPIRPYEFTGRGDRIGWVKGIDDNWHLTLFIENGRILDYPGRPLKTGLLEIAKIHKGDFRITANQNLIIAGVPESEKAKIEKIAKESGLMNAVTPQRENSMACVSFPTCPLAMAEAERFLPSFIDNIDNLMAKHGVSDEHIVMRVTGCPNGCGRAMLAEVGLVGKAPGRYNLHLGGNRIGTRIPRMYKENITESEILASLDELIGRWAKEREVGEGFGDFTVRAGIIRPVLDPARDLWD.

Positions 434, 440, 479, and 483 each coordinate [4Fe-4S] cluster. A siroheme-binding site is contributed by Cys483.

This sequence belongs to the nitrite and sulfite reductase 4Fe-4S domain family. Alpha(8)-beta(8). The alpha component is a flavoprotein, the beta component is a hemoprotein. Requires siroheme as cofactor. It depends on [4Fe-4S] cluster as a cofactor.

It catalyses the reaction hydrogen sulfide + 3 NADP(+) + 3 H2O = sulfite + 3 NADPH + 4 H(+). The protein operates within sulfur metabolism; hydrogen sulfide biosynthesis; hydrogen sulfide from sulfite (NADPH route): step 1/1. In terms of biological role, component of the sulfite reductase complex that catalyzes the 6-electron reduction of sulfite to sulfide. This is one of several activities required for the biosynthesis of L-cysteine from sulfate. The polypeptide is Sulfite reductase [NADPH] hemoprotein beta-component (Escherichia coli O127:H6 (strain E2348/69 / EPEC)).